The chain runs to 152 residues: Small ribosomal subunit protein bS6 (152 aa).

It belongs to the bacterial ribosomal protein bS6 family.

Its function is as follows. Binds together with bS18 to 16S ribosomal RNA. The polypeptide is Small ribosomal subunit protein bS6 (Bdellovibrio bacteriovorus (strain ATCC 15356 / DSM 50701 / NCIMB 9529 / HD100)).